The sequence spans 691 residues: Elongation factor G (691 aa).

Residues 8-282 (DRVRNIGIAA…AVVDYLPAPI (275 aa)) enclose the tr-type G domain. Residues 17-24 (AHIDAGKT), 81-85 (DTPGH), and 135-138 (NKMD) each bind GTP.

It belongs to the TRAFAC class translation factor GTPase superfamily. Classic translation factor GTPase family. EF-G/EF-2 subfamily.

The protein resides in the cytoplasm. Its function is as follows. Catalyzes the GTP-dependent ribosomal translocation step during translation elongation. During this step, the ribosome changes from the pre-translocational (PRE) to the post-translocational (POST) state as the newly formed A-site-bound peptidyl-tRNA and P-site-bound deacylated tRNA move to the P and E sites, respectively. Catalyzes the coordinated movement of the two tRNA molecules, the mRNA and conformational changes in the ribosome. The protein is Elongation factor G of Synechococcus sp. (strain RCC307).